The sequence spans 542 residues: Membrane protein insertase YidC (542 aa).

Transmembrane regions (helical) follow at residues 6-26 (NILL…WQTD), 326-346 (LVVD…LLMF), 350-370 (FVGN…GGLY), 421-441 (GGCL…WVLL), 458-478 (LSVQ…MFLM), and 501-521 (VIFT…WLVG).

Belongs to the OXA1/ALB3/YidC family. Type 1 subfamily. Interacts with the Sec translocase complex via SecD. Specifically interacts with transmembrane segments of nascent integral membrane proteins during membrane integration.

The protein localises to the cell inner membrane. Required for the insertion and/or proper folding and/or complex formation of integral membrane proteins into the membrane. Involved in integration of membrane proteins that insert both dependently and independently of the Sec translocase complex, as well as at least some lipoproteins. Aids folding of multispanning membrane proteins. The polypeptide is Membrane protein insertase YidC (Shewanella frigidimarina (strain NCIMB 400)).